We begin with the raw amino-acid sequence, 180 residues long: Adenine phosphoribosyltransferase (180 aa).

The protein belongs to the purine/pyrimidine phosphoribosyltransferase family. In terms of assembly, homodimer.

It localises to the cytoplasm. The enzyme catalyses AMP + diphosphate = 5-phospho-alpha-D-ribose 1-diphosphate + adenine. It participates in purine metabolism; AMP biosynthesis via salvage pathway; AMP from adenine: step 1/1. Catalyzes a salvage reaction resulting in the formation of AMP, that is energically less costly than de novo synthesis. The sequence is that of Adenine phosphoribosyltransferase from Mannheimia succiniciproducens (strain KCTC 0769BP / MBEL55E).